A 275-amino-acid polypeptide reads, in one-letter code: NH(3)-dependent NAD(+) synthetase (275 aa).

43–50 (GISGGVDS) is a binding site for ATP. Residue Asp-49 coordinates Mg(2+). Arg-145 contacts deamido-NAD(+). Thr-165 serves as a coordination point for ATP. A Mg(2+)-binding site is contributed by Glu-170. Positions 178 and 185 each coordinate deamido-NAD(+). Residues Lys-194 and Thr-216 each contribute to the ATP site. Position 265 to 266 (265 to 266 (HK)) interacts with deamido-NAD(+).

This sequence belongs to the NAD synthetase family. Homodimer.

The catalysed reaction is deamido-NAD(+) + NH4(+) + ATP = AMP + diphosphate + NAD(+) + H(+). The protein operates within cofactor biosynthesis; NAD(+) biosynthesis; NAD(+) from deamido-NAD(+) (ammonia route): step 1/1. Its function is as follows. Catalyzes the ATP-dependent amidation of deamido-NAD to form NAD. Uses ammonia as a nitrogen source. This chain is NH(3)-dependent NAD(+) synthetase, found in Shewanella denitrificans (strain OS217 / ATCC BAA-1090 / DSM 15013).